A 211-amino-acid chain; its full sequence is MEVSMPLPQIYVEKTLALIKPDVVDKEEEIQDIILGSGFTIIQRRKLHLSPEHCSNFYVEQYGKMFFPNLTAYMSSGPLVAMILARHKAISYWKELMGPSNSLVAKETHPDSLRAIYGTDELRNALHGSNDFAASEREIRFMFPAVIIEPIPIGQAAKDYINLYVAPTLLQGLTELCKEKPPDPYLWLADWLMKNNPNKPKLCHFPVTEEP.

The tract at residues 13–145 (EKTLALIKPD…EREIRFMFPA (133 aa)) is NDK.

It belongs to the NDK family. As to quaternary structure, component of the axonemal radial spoke complex 1 (RS1), at least composed of spoke head proteins RSPH1, RSPH3, RSPH9 and the cilia-specific component RSPH4A or sperm-specific component RSPH6A, spoke stalk proteins RSPH14, DNAJB13, DYDC1, ROPN1L and NME5, and the anchor protein IQUB. Interacts with IQUB. In terms of tissue distribution, expressed in the trachea, ependymal cells and oviduct (at protein level). Expressed predominantly in germ cells of the testis. Not expressed in testicular somatic cells.

The protein resides in the cell projection. It localises to the cilium. Its subcellular location is the cytoplasm. The protein localises to the cytoskeleton. It is found in the flagellum axoneme. Functions as part of axonemal radial spoke complexes that play an important part in the motility of sperm and cilia. Does not seem to have nucleoside diphosphate kinase (NDPK) activity. Confers protection from cell death by BAX and alters the cellular levels of several antioxidant enzymes including GPX5. May play a role in spermiogenesis by increasing the ability of late-stage spermatids to eliminate reactive oxygen species. The sequence is that of Nucleoside diphosphate kinase homolog 5 (Nme5) from Mus musculus (Mouse).